Reading from the N-terminus, the 279-residue chain is MAESLHRAFICGHPVAHSRSPVIHNFWLKQHGIEGSYERRDIAPEAFSLFIREFPRFYMGGNVTIPHKESAWRLVETRDEAAETIGAVNTLWLQDGRIMGGNTDTYGFAANLDMELAGWEKNAVATVLGAGGAALAVVHALQSRGIRDIRIVNRTVSRARAVVDRFKGGTSAHAWEAVPDLLSDTSLLVNTTSLGMHGGPEGHIDLAPLPDSAIVTDIVYVPLRTPLLASAAARGLRTVDGLGMLLHQAVPGFERWFGVRPEVTPHLREIVVADLEAGK.

Shikimate is bound by residues 18 to 20 and Thr-64; that span reads SRS. The active-site Proton acceptor is the Lys-68. Glu-80 contributes to the NADP(+) binding site. Shikimate is bound by residues Asn-89 and Asp-104. NADP(+) contacts are provided by residues 129-133, 153-158, and Ile-218; these read GAGGA and NRTVSR. Tyr-220 contributes to the shikimate binding site. An NADP(+)-binding site is contributed by Gly-241.

It belongs to the shikimate dehydrogenase family. In terms of assembly, homodimer.

The catalysed reaction is shikimate + NADP(+) = 3-dehydroshikimate + NADPH + H(+). The protein operates within metabolic intermediate biosynthesis; chorismate biosynthesis; chorismate from D-erythrose 4-phosphate and phosphoenolpyruvate: step 4/7. Involved in the biosynthesis of the chorismate, which leads to the biosynthesis of aromatic amino acids. Catalyzes the reversible NADPH linked reduction of 3-dehydroshikimate (DHSA) to yield shikimate (SA). The polypeptide is Shikimate dehydrogenase (NADP(+)) (Chelativorans sp. (strain BNC1)).